We begin with the raw amino-acid sequence, 179 residues long: Apoptosis regulator Bcl-2 homolog (179 aa).

A BH1 motif is present at residues 76-95 (ELFKDLINWGRICGFIVFSA). Positions 126–141 (PWMISHGGQEEFLAFS) match the BH2 motif.

It belongs to the Bcl-2 family. As to quaternary structure, interacts with host BECN1 (via BH3 homology domain); this interaction allows the virus to inhibit BECN1, and thus autophagy. Interacts with host BID. Interacts with host BAX.

It is found in the host mitochondrion. It localises to the host endoplasmic reticulum. Its function is as follows. Suppresses apoptosis in host cell to promote the viral replication. Has the ability to potentially bind to all the members of the proapoptotic Bcl-2 family. Inhibits autophagy by interacting with host Beclin 1 (BECN1). The protein is Apoptosis regulator Bcl-2 homolog of Ornithodoros (relapsing fever ticks).